We begin with the raw amino-acid sequence, 20 residues long: Brevinin-1SPb (20 aa).

Residues C14 and C20 are joined by a disulfide bond.

Expressed by the skin glands.

The protein resides in the secreted. In terms of biological role, antimicrobial peptide with activity against Gram-negative and Gram-positive bacteria (MIC=50 uM against E.coli, MIC=6 uM against S.aureus) and fungi (MIC=13 uM against C.albicans). Shows hemolytic activity on human erythrocytes (HC(50)=25 uM). This chain is Brevinin-1SPb, found in Lithobates septentrionalis (Mink frog).